The sequence spans 1154 residues: Spike glycoprotein (1154 aa).

An N-terminal signal peptide occupies residues 1-18 (MLERSLLLATLLSALCSA). Residues 19–1096 (NLFGNNSYVY…LKTYIKWPWY (1078 aa)) are Extracellular-facing. 23 N-linked (GlcNAc...) asparagine; by host glycosylation sites follow: Asn23, Asn74, Asn102, Asn139, Asn145, Asn164, Asn179, Asn213, Asn238, Asn248, Asn265, Asn272, Asn277, Asn307, Asn426, Asn448, Asn514, Asn531, Asn543, Asn580, Asn592, Asn670, and Asn677. Residues 770–875 (IPFATQLQAR…QVDRIITGRL (106 aa)) are heptad repeat 1 (HR1). A coiled-coil region spans residues 823–867 (QDVVNKQSSILTETMASLNKNFGAISSVLQDIYQQLDSIQADAQV). N-linked (GlcNAc...) asparagine; by host glycosylation is found at Asn948, Asn961, Asn980, Asn1015, Asn1039, Asn1052, and Asn1075. The interval 1025 to 1106 (NDDFDFDDEL…VWLAIAFATI (82 aa)) is heptad repeat 2 (HR2). Residues 1056–1084 (PILDIGSEIDRIQGVIQGLNDSLIDLETL) are a coiled coil. A helical membrane pass occupies residues 1097 to 1117 (VWLAIAFATIIFILILGWLFF). At 1118–1154 (MTGCCGCCCGCFGIIPLMSKCGKKSSYYTTFDNDVVT) the chain is on the cytoplasmic side.

The protein belongs to the gammacoronaviruses spike protein family. As to quaternary structure, homotrimer; each monomer consists of a S1 and a S2 subunit. The resulting peplomers protrude from the virus surface as spikes. Specific enzymatic cleavages in vivo yield mature proteins. The precursor is processed into S1 and S2 by host cell furin or furin-like protease to yield the mature S1 and S2 proteins. The cleavage site between S1 and S2 requires the optimal sequence [KR]-X-[KR]-R. Additionally, a second cleavage leads to the release of a fusion peptide after viral attachment to host cell receptor.

Its subcellular location is the virion membrane. It localises to the host endoplasmic reticulum-Golgi intermediate compartment membrane. In terms of biological role, attaches the virion to the host cell membrane by interacting with sialic acids, initiating the infection. Its function is as follows. Mediates fusion of the virion and cellular membranes by acting as a class I viral fusion protein. Under the current model, the protein has at least 3 conformational states: pre-fusion native state, pre-hairpin intermediate state, and post-fusion hairpin state. During viral and target cell membrane fusion, the coiled coil regions (heptad repeats) assume a trimer-of-hairpins structure, positioning the fusion peptide in close proximity to the C-terminal region of the ectodomain. The formation of this structure appears to drive apposition and subsequent fusion of viral and target cell membranes. Acts as a viral fusion peptide after S2 cleavage occurring upon virus endocytosis. This Gallus gallus (Chicken) protein is Spike glycoprotein.